We begin with the raw amino-acid sequence, 279 residues long: Non-structural maintenance of chromosomes element 3 homolog (279 aa).

The disordered stretch occupies residues 1–52 (MLQKPRGRGRPSTQADPERDWGGAGEEGPSTSRAAGGSSQGSRASLSAPTVG). Over residues 30 to 48 (STSRAAGGSSQGSRASLSA) the composition is skewed to low complexity. Residue Ser38 is modified to Phosphoserine. Residues 52-279 (GPRTQKQLEL…ATASAPATSS (228 aa)) are interaction with NSMCE1. The region spanning 59 to 259 (LELKVAELVQ…KDWPTQYCEA (201 aa)) is the MAGE domain.

In terms of assembly, component of the SMC5-SMC6 complex which consists at least of SMC5, SMC6, NSMCE2, NSMCE1, NSMCE4A or EID3 and NSMCE3. NSMCE1, NSMCE4A or EID3 and NSMCE3 probably form a subcomplex that bridges the head domains of the SMC5:SMC6 heterodimer. Interacts with PJA1. Interacts with E2F1 (via C-terminus). Interacts with NGFR (via C-terminus). Interacts with NSMCE1. Interacts with NSMCE4. Interacts with SMC6. Interacts with EID3. Ubiquitous.

The protein resides in the cytoplasm. Its subcellular location is the nucleus. It is found in the chromosome. It localises to the telomere. Its function is as follows. Component of the SMC5-SMC6 complex, a complex involved in repair of DNA double-strand breaks by homologous recombination. The complex may promote sister chromatid homologous recombination by recruiting the SMC1-SMC3 cohesin complex to double-strand breaks. The complex is required for telomere maintenance via recombination in ALT (alternative lengthening of telomeres) cell lines and mediates sumoylation of shelterin complex (telosome) components which is proposed to lead to shelterin complex disassembly in ALT-associated PML bodies (APBs). In vitro enhances ubiquitin ligase activity of NSMCE1. Proposed to act through recruitment and/or stabilization of the Ubl-conjugating enzyme (E2) at the E3:substrate complex. May be a growth suppressor that facilitates the entry of the cell into cell cycle arrest. The sequence is that of Non-structural maintenance of chromosomes element 3 homolog (Nsmce3) from Mus musculus (Mouse).